Reading from the N-terminus, the 862-residue chain is MFLNTLKAVFGTKNDREVKKYFKRVAQINALEGNYQNLSDDELKAEFAKFKEQILSGEKNENDVLNDVFAIVRETGKRTLNMRHFDVQLIGGMVLHDGKIAEMKTGEGKTLVATLPVVLNAMSGKGVHVVTVNDYLAKRDAEQMSAIYNFLGFSVGVVLSSQNSDIEHKQAYDCDITYGTNNEFGFDYLRDNMKFSKAEKVQREHNFVIVDEVDSILIDEARTPLIISGPTNRTLDGYIKANEVAKQMQKGEAVLPPAKPEGDFVVDEKNRNILITEAGIAKAEKLFGVENLYSLDNAILAHQLDQALKAHNLFEKDVHYVLRNNEVIIVDEFTGRLSEGRRFSEGLHQALEAKENVKIQEESQTLADITFQNYFRMYNKLAGMTGTAQTEATEFSQIYSLDVISIPTNIPIKRQDKDDLIYKTQNEKFKAVIEEIKKANAKGQPVLVGTASIERSEVFHNMLVKEKIPHHVLNAKNHEQEALIIQDAGKKGAVTIATNMAGRGVDIKIDDEIRALGGLYIIGTERHESRRIDNQLRGRAGRQGDPGISRFYLSLEDNLLRIFGGDRIKSIMDRLGIEEGESIESRIVTRAVENAQKKVESLHFESRKHLLEYDDVANEQRKTIYRYRNELLDENYDIRAKISQNIAEYSANVMNDYILDESGSNVNFENLKAKILYECSTQISEKDFENLSVIEMQDKLSQILENSYNEKMSRLEIKELRNIERILYLQVLDNAWREHLYQMDILKTGIGLRGYNQKDPLVEYKKESYNLFLELVNRIKFDSIKLLFSVQFNQEEVQNLENKANEENEKLLQSSVEMGASEDNLGEAEFKKVPRNAPCPCGSGKKFKECHGKSGPKQGILA.

ATP-binding positions include Q88, 106–110, and D506; that span reads GEGKT. 4 residues coordinate Zn(2+): C839, C841, C850, and H851.

This sequence belongs to the SecA family. In terms of assembly, monomer and homodimer. Part of the essential Sec protein translocation apparatus which comprises SecA, SecYEG and auxiliary proteins SecDF-YajC and YidC. Zn(2+) serves as cofactor.

It is found in the cell inner membrane. Its subcellular location is the cytoplasm. The catalysed reaction is ATP + H2O + cellular proteinSide 1 = ADP + phosphate + cellular proteinSide 2.. In terms of biological role, part of the Sec protein translocase complex. Interacts with the SecYEG preprotein conducting channel. Has a central role in coupling the hydrolysis of ATP to the transfer of proteins into and across the cell membrane, serving as an ATP-driven molecular motor driving the stepwise translocation of polypeptide chains across the membrane. The chain is Protein translocase subunit SecA from Campylobacter jejuni (strain RM1221).